The chain runs to 236 residues: Pyridoxal 5'-phosphate synthase subunit PdxT (236 aa).

61–63 (GES) contributes to the L-glutamine binding site. Cysteine 93 acts as the Nucleophile in catalysis. L-glutamine is bound by residues arginine 127 and 163–164 (IR). Residues histidine 215 and glutamate 217 each act as charge relay system in the active site.

This sequence belongs to the glutaminase PdxT/SNO family. In the presence of PdxS, forms a dodecamer of heterodimers. Only shows activity in the heterodimer.

It catalyses the reaction aldehydo-D-ribose 5-phosphate + D-glyceraldehyde 3-phosphate + L-glutamine = pyridoxal 5'-phosphate + L-glutamate + phosphate + 3 H2O + H(+). The enzyme catalyses L-glutamine + H2O = L-glutamate + NH4(+). It functions in the pathway cofactor biosynthesis; pyridoxal 5'-phosphate biosynthesis. Its function is as follows. Catalyzes the hydrolysis of glutamine to glutamate and ammonia as part of the biosynthesis of pyridoxal 5'-phosphate. The resulting ammonia molecule is channeled to the active site of PdxS. The protein is Pyridoxal 5'-phosphate synthase subunit PdxT of Pseudarthrobacter chlorophenolicus (strain ATCC 700700 / DSM 12829 / CIP 107037 / JCM 12360 / KCTC 9906 / NCIMB 13794 / A6) (Arthrobacter chlorophenolicus).